A 273-amino-acid chain; its full sequence is 4-hydroxy-tetrahydrodipicolinate reductase (273 aa).

NAD(+) is bound by residues 12 to 17 (GAGGRM) and glutamate 38. Arginine 39 contacts NADP(+). NAD(+) is bound by residues 102 to 104 (GTT) and 126 to 129 (AANF). Catalysis depends on histidine 159, which acts as the Proton donor/acceptor. Position 160 (histidine 160) interacts with (S)-2,3,4,5-tetrahydrodipicolinate. The active-site Proton donor is lysine 163. 169 to 170 (GT) provides a ligand contact to (S)-2,3,4,5-tetrahydrodipicolinate.

The protein belongs to the DapB family. As to quaternary structure, homotetramer.

The protein localises to the cytoplasm. The catalysed reaction is (S)-2,3,4,5-tetrahydrodipicolinate + NAD(+) + H2O = (2S,4S)-4-hydroxy-2,3,4,5-tetrahydrodipicolinate + NADH + H(+). The enzyme catalyses (S)-2,3,4,5-tetrahydrodipicolinate + NADP(+) + H2O = (2S,4S)-4-hydroxy-2,3,4,5-tetrahydrodipicolinate + NADPH + H(+). Its pathway is amino-acid biosynthesis; L-lysine biosynthesis via DAP pathway; (S)-tetrahydrodipicolinate from L-aspartate: step 4/4. Catalyzes the conversion of 4-hydroxy-tetrahydrodipicolinate (HTPA) to tetrahydrodipicolinate. The sequence is that of 4-hydroxy-tetrahydrodipicolinate reductase from Klebsiella pneumoniae subsp. pneumoniae (strain ATCC 700721 / MGH 78578).